A 404-amino-acid chain; its full sequence is Argininosuccinate synthase (404 aa).

ATP is bound by residues 10–18 (AYSGGVDTS) and alanine 38. Tyrosine 89 serves as a coordination point for L-citrulline. Glycine 119 serves as a coordination point for ATP. Residues threonine 121, asparagine 125, and aspartate 126 each contribute to the L-aspartate site. Asparagine 125 is a binding site for L-citrulline. Residues arginine 129, serine 177, serine 186, glutamate 262, and tyrosine 274 each coordinate L-citrulline.

It belongs to the argininosuccinate synthase family. Type 1 subfamily. In terms of assembly, homotetramer.

The protein resides in the cytoplasm. It catalyses the reaction L-citrulline + L-aspartate + ATP = 2-(N(omega)-L-arginino)succinate + AMP + diphosphate + H(+). It participates in amino-acid biosynthesis; L-arginine biosynthesis; L-arginine from L-ornithine and carbamoyl phosphate: step 2/3. This is Argininosuccinate synthase from Prochlorococcus marinus (strain MIT 9215).